Reading from the N-terminus, the 436-residue chain is GTPase Der (436 aa).

EngA-type G domains are found at residues 4-167 (PTIA…PNEE) and 175-351 (IKFS…QSQN). GTP contacts are provided by residues 10–17 (GRPNVGKS), 57–61 (DTGGI), 119–122 (NKVD), 181–188 (GRPNVGKS), 229–233 (DTAGM), and 294–297 (NKWD). Residues 352 to 436 (TRIPSAVLND…PIHLIARKRK (85 aa)) form the KH-like domain.

Belongs to the TRAFAC class TrmE-Era-EngA-EngB-Septin-like GTPase superfamily. EngA (Der) GTPase family. In terms of assembly, associates with the 50S ribosomal subunit.

Its function is as follows. GTPase that plays an essential role in the late steps of ribosome biogenesis. The chain is GTPase Der from Streptococcus gordonii (strain Challis / ATCC 35105 / BCRC 15272 / CH1 / DL1 / V288).